The chain runs to 494 residues: UDP-N-acetylmuramoyl-L-alanyl-D-glutamate--L-lysine ligase (494 aa).

Ser30 provides a ligand contact to UDP-N-acetyl-alpha-D-muramoyl-L-alanyl-D-glutamate. 110–116 is a binding site for ATP; the sequence is GTNGKTS. UDP-N-acetyl-alpha-D-muramoyl-L-alanyl-D-glutamate-binding positions include 152 to 153, Ser179, and Arg187; that span reads TT. Lys219 carries the post-translational modification N6-carboxylysine. The L-lysine recognition motif signature appears at 406 to 409; sequence DNPA.

The protein belongs to the MurCDEF family. MurE subfamily. Carboxylation is probably crucial for Mg(2+) binding and, consequently, for the gamma-phosphate positioning of ATP.

Its subcellular location is the cytoplasm. It carries out the reaction UDP-N-acetyl-alpha-D-muramoyl-L-alanyl-D-glutamate + L-lysine + ATP = UDP-N-acetyl-alpha-D-muramoyl-L-alanyl-gamma-D-glutamyl-L-lysine + ADP + phosphate + H(+). It participates in cell wall biogenesis; peptidoglycan biosynthesis. In terms of biological role, catalyzes the addition of L-lysine to the nucleotide precursor UDP-N-acetylmuramoyl-L-alanyl-D-glutamate (UMAG) in the biosynthesis of bacterial cell-wall peptidoglycan. This is UDP-N-acetylmuramoyl-L-alanyl-D-glutamate--L-lysine ligase from Staphylococcus aureus (strain Mu3 / ATCC 700698).